Reading from the N-terminus, the 263-residue chain is Versicolorin reductase 1 (263 aa).

Ile-22, Asp-68, Asn-95, and Arg-128 together coordinate NADP(+). Residues Ser-144 and Ser-145 each act as proton donor in the active site. Residues Tyr-159, Lys-163, Ile-192, and Thr-194 each coordinate NADP(+). Tyr-159 serves as the catalytic Proton acceptor. Lys-163 functions as the Lowers pKa of active site Tyr in the catalytic mechanism.

It belongs to the short-chain dehydrogenases/reductases (SDR) family.

The protein resides in the cytoplasm. The protein localises to the cytosol. It participates in mycotoxin biosynthesis. Its function is as follows. Versicolorin reductase; part of the fragmented gene cluster that mediates the biosynthesis of dothistromin (DOTH), a polyketide toxin very similar in structure to the aflatoxin precursor, versicolorin B. The first step of the pathway is the conversion of acetate to norsolorinic acid (NOR) and requires the fatty acid synthase subunits hexA and hexB, as well as the polyketide synthase pksA. PksA combines a hexanoyl starter unit and 7 malonyl-CoA extender units to synthesize the precursor NOR. The hexanoyl starter unit is provided to the acyl-carrier protein (ACP) domain by the fungal fatty acid synthase hexA/hexB. The second step is the conversion of NOR to averantin (AVN) and requires the norsolorinic acid ketoreductase nor1, which catalyzes the dehydration of norsolorinic acid to form (1'S)-averantin. The cytochrome P450 monooxygenase avnA then catalyzes the hydroxylation of AVN to 5'hydroxyaverantin (HAVN). The next step is performed by adhA that transforms HAVN to averufin (AVF). Averufin might then be converted to hydroxyversicolorone by cypX and avfA. Hydroxyversicolorone is further converted versiconal hemiacetal acetate (VHA) by moxY. VHA is then the substrate for the versiconal hemiacetal acetate esterase est1 to yield versiconal (VAL). Versicolorin B synthase vbsA then converts VAL to versicolorin B (VERB) by closing the bisfuran ring. Then, the activity of the versicolorin B desaturase verB leads to versicolorin A (VERA). DotB, a predicted chloroperoxidase, may perform epoxidation of the A-ring of VERA. Alternatively, a cytochrome P450, such as cypX or avnA could catalyze this step. It is also possible that another, uncharacterized, cytochrome P450 enzyme is responsible for this step. Opening of the epoxide could potentially be achieved by the epoxide hydrolase epoA. However, epoA seems not to be required for DOTH biosynthesis, but other epoxide hydrolases may have the ability to complement this hydrolysis. Alternatively, opening of the epoxide ring could be achieved non-enzymatically. The next step is the deoxygenation of ring A to yield the 5,8-dihydroxyanthraquinone which is most likely catalyzed by the NADPH dehydrogenase encoded by ver1. The last stages of DOTH biosynthesis are proposed to involve hydroxylation of the bisfuran. OrdB and norB might have oxidative roles here. An alternative possibility is that cytochrome P450 monoogenases such as avnA and cypX might perform these steps in addition to previously proposed steps. The polypeptide is Versicolorin reductase 1 (Dothistroma septosporum (Red band needle blight fungus)).